The chain runs to 101 residues: UPF0235 protein MmarC6_1603 (101 aa).

The protein belongs to the UPF0235 family.

This is UPF0235 protein MmarC6_1603 from Methanococcus maripaludis (strain C6 / ATCC BAA-1332).